The following is a 198-amino-acid chain: Recombination protein RecR (198 aa).

Residues cysteine 57–cysteine 72 form a C4-type zinc finger. One can recognise a Toprim domain in the interval serine 80–proline 174.

It belongs to the RecR family.

May play a role in DNA repair. It seems to be involved in an RecBC-independent recombinational process of DNA repair. It may act with RecF and RecO. The sequence is that of Recombination protein RecR from Pseudomonas paraeruginosa (strain DSM 24068 / PA7) (Pseudomonas aeruginosa (strain PA7)).